A 62-amino-acid polypeptide reads, in one-letter code: Sperm protamine P1 (62 aa).

Positions 1–62 (MARYRHSRSR…RYSRRRRRRY (62 aa)) are disordered.

This sequence belongs to the protamine P1 family. In terms of tissue distribution, testis.

The protein localises to the nucleus. It localises to the chromosome. Its function is as follows. Protamines substitute for histones in the chromatin of sperm during the haploid phase of spermatogenesis. They compact sperm DNA into a highly condensed, stable and inactive complex. The polypeptide is Sperm protamine P1 (PRM1) (Wallabia bicolor (Swamp wallaby)).